A 276-amino-acid chain; its full sequence is Tryptophan synthase alpha chain (276 aa).

Active-site proton acceptor residues include Glu-46 and Glu-57.

This sequence belongs to the TrpA family. As to quaternary structure, tetramer of two alpha and two beta chains.

The catalysed reaction is (1S,2R)-1-C-(indol-3-yl)glycerol 3-phosphate + L-serine = D-glyceraldehyde 3-phosphate + L-tryptophan + H2O. It participates in amino-acid biosynthesis; L-tryptophan biosynthesis; L-tryptophan from chorismate: step 5/5. In terms of biological role, the alpha subunit is responsible for the aldol cleavage of indoleglycerol phosphate to indole and glyceraldehyde 3-phosphate. The polypeptide is Tryptophan synthase alpha chain (Halobacterium salinarum (strain ATCC 29341 / DSM 671 / R1)).